The chain runs to 220 residues: Deoxyribose-phosphate aldolase (220 aa).

The active-site Proton donor/acceptor is the aspartate 89. Lysine 151 functions as the Schiff-base intermediate with acetaldehyde in the catalytic mechanism. Lysine 180 serves as the catalytic Proton donor/acceptor.

Belongs to the DeoC/FbaB aldolase family. DeoC type 1 subfamily.

Its subcellular location is the cytoplasm. The enzyme catalyses 2-deoxy-D-ribose 5-phosphate = D-glyceraldehyde 3-phosphate + acetaldehyde. The protein operates within carbohydrate degradation; 2-deoxy-D-ribose 1-phosphate degradation; D-glyceraldehyde 3-phosphate and acetaldehyde from 2-deoxy-alpha-D-ribose 1-phosphate: step 2/2. Functionally, catalyzes a reversible aldol reaction between acetaldehyde and D-glyceraldehyde 3-phosphate to generate 2-deoxy-D-ribose 5-phosphate. This is Deoxyribose-phosphate aldolase from Streptococcus sanguinis (strain SK36).